Reading from the N-terminus, the 565-residue chain is Sulfite reductase [NADPH] hemoprotein beta-component (565 aa).

[4Fe-4S] cluster-binding residues include C429, C435, C474, and C478. C478 is a siroheme binding site.

The protein belongs to the nitrite and sulfite reductase 4Fe-4S domain family. As to quaternary structure, alpha(8)-beta(8). The alpha component is a flavoprotein, the beta component is a hemoprotein. Requires siroheme as cofactor. It depends on [4Fe-4S] cluster as a cofactor.

The catalysed reaction is hydrogen sulfide + 3 NADP(+) + 3 H2O = sulfite + 3 NADPH + 4 H(+). The protein operates within sulfur metabolism; hydrogen sulfide biosynthesis; hydrogen sulfide from sulfite (NADPH route): step 1/1. Its function is as follows. Component of the sulfite reductase complex that catalyzes the 6-electron reduction of sulfite to sulfide. This is one of several activities required for the biosynthesis of L-cysteine from sulfate. The sequence is that of Sulfite reductase [NADPH] hemoprotein beta-component from Shewanella loihica (strain ATCC BAA-1088 / PV-4).